Consider the following 336-residue polypeptide: Cytosolic 5'-nucleotidase 3A (336 aa).

The Nucleophile role is filled by Asp-88. The Mg(2+) site is built by Asp-88 and Asp-90. Asp-90 serves as the catalytic Proton donor. Glu-135 contributes to the CMP binding site. 2 residues coordinate N(7)-methyl-GMP: Glu-135 and Ser-156. Substrate-binding positions include 203 to 204 (SA) and Lys-252. Asp-277 contacts Mg(2+). Ser-278 carries the post-translational modification Phosphoserine.

This sequence belongs to the pyrimidine 5'-nucleotidase family. In terms of assembly, monomer. Isoforms 1, 3 and 4 are expressed in reticulocytes. Isoform 4 is hardly detectable in bone marrow and fetal liver.

It is found in the cytoplasm. The protein localises to the endoplasmic reticulum. The enzyme catalyses N(7)-methyl-GMP + H2O = N(7)-methylguanosine + phosphate. It catalyses the reaction CMP + H2O = cytidine + phosphate. The catalysed reaction is a ribonucleoside 5'-phosphate + H2O = a ribonucleoside + phosphate. Its function is as follows. Nucleotidase which shows specific activity towards cytidine monophosphate (CMP) and 7-methylguanosine monophosphate (m(7)GMP). CMP seems to be the preferred substrate. This Homo sapiens (Human) protein is Cytosolic 5'-nucleotidase 3A (NT5C3A).